Here is a 315-residue protein sequence, read N- to C-terminus: Protein-L-isoaspartate O-methyltransferase (315 aa).

Disordered regions lie at residues 1–47 (MSGE…KPAA) and 59–89 (RALP…AAPK). A compositionally biased stretch (basic and acidic residues) spans 14–34 (EDLKRAPRKSEVRSGSGERHA). Composition is skewed to low complexity over residues 35-47 (ASAV…KPAA) and 59-81 (RALP…LKPA). Ser-162 is an active-site residue.

This sequence belongs to the methyltransferase superfamily. L-isoaspartyl/D-aspartyl protein methyltransferase family.

It localises to the cytoplasm. It carries out the reaction [protein]-L-isoaspartate + S-adenosyl-L-methionine = [protein]-L-isoaspartate alpha-methyl ester + S-adenosyl-L-homocysteine. Functionally, catalyzes the methyl esterification of L-isoaspartyl residues in peptides and proteins that result from spontaneous decomposition of normal L-aspartyl and L-asparaginyl residues. It plays a role in the repair and/or degradation of damaged proteins. This Burkholderia ambifaria (strain MC40-6) protein is Protein-L-isoaspartate O-methyltransferase.